The primary structure comprises 862 residues: uncharacterized protein (862 aa).

3 disordered regions span residues His45–Val91, Arg633–Asp824, and Gly837–Ser862. Composition is skewed to acidic residues over residues Met57–Glu69 and Pro78–Val91. Composition is skewed to basic and acidic residues over residues Arg633–Lys650, Arg657–Lys686, and Thr694–Thr703. The segment covering Glu751 to Lys760 has biased composition (basic residues). A compositionally biased stretch (basic and acidic residues) spans Lys761–Ser779.

This is an uncharacterized protein from Ictaluridae (bullhead catfishes).